The primary structure comprises 156 residues: Ribosome-binding factor A (156 aa).

A compositionally biased stretch (basic and acidic residues) spans 125–138 (RVREGAKHAGDPDP). The segment at 125–156 (RVREGAKHAGDPDPYRVGGAEDTDGDTDGDER) is disordered. Residues 145–156 (EDTDGDTDGDER) are compositionally biased toward acidic residues.

This sequence belongs to the RbfA family. Monomer. Binds 30S ribosomal subunits, but not 50S ribosomal subunits or 70S ribosomes.

The protein localises to the cytoplasm. Functionally, one of several proteins that assist in the late maturation steps of the functional core of the 30S ribosomal subunit. Associates with free 30S ribosomal subunits (but not with 30S subunits that are part of 70S ribosomes or polysomes). Required for efficient processing of 16S rRNA. May interact with the 5'-terminal helix region of 16S rRNA. This chain is Ribosome-binding factor A, found in Mycolicibacterium smegmatis (strain ATCC 700084 / mc(2)155) (Mycobacterium smegmatis).